Reading from the N-terminus, the 278-residue chain is MANYTAADIKALRERTGAGMMDVKKALDEADGNAEKALELIRIKGLKGATKREGRSTAEGLVAATVENGVGVMVEVNCETDFVAKSGPFIEFANKALAAAVASGAADVDALLAAEVDGKPLSELVIEAGALLGEKVAIRRLARVTGAVVDAYLHKTSKDLPAQVGVLFAVDGEGEAATTAAHDVAVHIAAYTPNYLLREDVPADLVDSERRIADETARAEGKPEAALPKIVEGRLTGFFKENVLLDQPFAKDQKQSVAQVLDAASAKAVGFARFRVGA.

The tract at residues 80–83 (TDFV) is involved in Mg(2+) ion dislocation from EF-Tu.

Belongs to the EF-Ts family.

The protein resides in the cytoplasm. In terms of biological role, associates with the EF-Tu.GDP complex and induces the exchange of GDP to GTP. It remains bound to the aminoacyl-tRNA.EF-Tu.GTP complex up to the GTP hydrolysis stage on the ribosome. This chain is Elongation factor Ts, found in Renibacterium salmoninarum (strain ATCC 33209 / DSM 20767 / JCM 11484 / NBRC 15589 / NCIMB 2235).